We begin with the raw amino-acid sequence, 462 residues long: MSKLWGGRFTEEAEAWVEEFGASISFDKQLVKQDIEGSIAHVMMLAKQGIVTNDEAEKIKEGLQYLLEEAKENKLHFSVEAEDVHLNIEKMLIEQIGEVGGKLHTGRSRNDQVATDMHLYLKEKVQDIINAIKQLQKVLVDQAEENIETIMPGYTHLQRAQPISFAHHILAYFWMLERDVNRYEDSLKRINVSPLGAGALAGTTFPIDRAYSAKLLDFEGIYENSLDAVSDRDFILEFLSNSSMLMMHISRFCEELILWSSQEFQFIEMSDRYATGSSIMPQKKNPDMAELIRGKTGRVYGNLFSLLTVMKGLPLAYNKDLQEDKEGMFDTVKTVEGCLHIMAGMLETMTVNKENMGQAVTQDFSNATEVADYLANKGLPFRQAHEIVGKLVLHCTKKGIYLLDVPLETYKEMSPLFEEDLYEVLSPYAAVKRRNSAGGTGFVQIEQALEKAKILVGEVTRN.

It belongs to the lyase 1 family. Argininosuccinate lyase subfamily.

It is found in the cytoplasm. It carries out the reaction 2-(N(omega)-L-arginino)succinate = fumarate + L-arginine. It participates in amino-acid biosynthesis; L-arginine biosynthesis; L-arginine from L-ornithine and carbamoyl phosphate: step 3/3. The protein is Argininosuccinate lyase of Bacillus cytotoxicus (strain DSM 22905 / CIP 110041 / 391-98 / NVH 391-98).